Reading from the N-terminus, the 195-residue chain is Dephospho-CoA kinase (195 aa).

The 192-residue stretch at 4–195 (IIGLTGGIAS…EQILDALQRL (192 aa)) folds into the DPCK domain. Residue 12–17 (ASGKST) participates in ATP binding.

The protein belongs to the CoaE family.

The protein resides in the cytoplasm. It carries out the reaction 3'-dephospho-CoA + ATP = ADP + CoA + H(+). Its pathway is cofactor biosynthesis; coenzyme A biosynthesis; CoA from (R)-pantothenate: step 5/5. Its function is as follows. Catalyzes the phosphorylation of the 3'-hydroxyl group of dephosphocoenzyme A to form coenzyme A. In Streptococcus agalactiae serotype Ia (strain ATCC 27591 / A909 / CDC SS700), this protein is Dephospho-CoA kinase.